A 360-amino-acid polypeptide reads, in one-letter code: MKNIFLHSLSLENYRNFKNLELKTDNTPIILIGENGSGKTNILEAISLFYPGRGLRSAKLANVCKTSEDHCLVKALLQSKLGLAEFTTQFKRSSNRRITEYNESKIANNELSKFTSMVWLTPHMEGIFTSGSNDRRKFLDRIVYNFDPKHAELVSKYEYYMHERNKILVEDIRDDNWLKIIEEKMADISNHIANNRLKTLEFMQQAIDDLENEFPKADLSIDGIVEQKILNGKENIVSFITAELYQTRSKDKLLGRTSFGVHKSDFLVKHQKKNILAKFCSTGEQKAILIAIILAEMNYAIKLTKIAPILLLDEVFVHLDDKRRQYLIEFLTGLNMQLWVTTTNLEGIENFATKAQLIKL.

33 to 40 (GENGSGKT) contacts ATP.

The protein belongs to the RecF family.

The protein localises to the cytoplasm. The RecF protein is involved in DNA metabolism; it is required for DNA replication and normal SOS inducibility. RecF binds preferentially to single-stranded, linear DNA. It also seems to bind ATP. This chain is DNA replication and repair protein RecF, found in Rickettsia peacockii (strain Rustic).